The following is a 491-amino-acid chain: Cobyric acid synthase (491 aa).

The region spanning 253 to 429 (AHRVAVVRLP…WHGSLEGDAL (177 aa)) is the GATase cobBQ-type domain. Residue cysteine 334 is the Nucleophile of the active site. Histidine 421 is an active-site residue.

It belongs to the CobB/CobQ family. CobQ subfamily.

It participates in cofactor biosynthesis; adenosylcobalamin biosynthesis. Its function is as follows. Catalyzes amidations at positions B, D, E, and G on adenosylcobyrinic A,C-diamide. NH(2) groups are provided by glutamine, and one molecule of ATP is hydrogenolyzed for each amidation. The sequence is that of Cobyric acid synthase from Mycobacterium ulcerans (strain Agy99).